We begin with the raw amino-acid sequence, 292 residues long: Ribosomal RNA small subunit methyltransferase I (292 aa).

Belongs to the methyltransferase superfamily. RsmI family.

It is found in the cytoplasm. It catalyses the reaction cytidine(1402) in 16S rRNA + S-adenosyl-L-methionine = 2'-O-methylcytidine(1402) in 16S rRNA + S-adenosyl-L-homocysteine + H(+). Its function is as follows. Catalyzes the 2'-O-methylation of the ribose of cytidine 1402 (C1402) in 16S rRNA. The protein is Ribosomal RNA small subunit methyltransferase I of Bacillus subtilis (strain 168).